The primary structure comprises 2690 residues: Probable polyketide synthase 28 (2690 aa).

Residues 15–443 (YGDVAVIGIG…GSNVCLILSE (429 aa)) form the Ketosynthase family 3 (KS3) domain. Catalysis depends on for beta-ketoacyl synthase activity residues cysteine 187, histidine 326, and histidine 366. Positions 651–684 (GVSADIIVGHSLGELSSSYSSGMIDFETLCHLIY) are acyl/malonyl transferases. The active-site For acyl/malonyl transferase activity is the serine 661. Residues 906–934 (NFKSQLTNINNNNNNINNNNNNNNNNNNN) are a coiled coil. The interval 916–946 (NNNNNINNNNNNNNNNNNNNNNNNNNNNNNN) is disordered. Residues 973 to 1102 (HEKITNEGPS…GNFSLFKHNS (130 aa)) are N-terminal hotdog fold. The region spanning 973-1285 (HEKITNEGPS…CSSVSLANPS (313 aa)) is the PKS/mFAS DH domain. Catalysis depends on histidine 1014, which acts as the Proton acceptor; for dehydratase activity. Positions 1119 to 1285 (NFTTISKHDF…CSSVSLANPS (167 aa)) are C-terminal hotdog fold. Residue aspartate 1188 is the Proton donor; for dehydratase activity of the active site. Residues 1401–1429 (LNHHNNSENKNKNNNNNNNSNNNENSNNE) are disordered. Positions 1412 to 1429 (KNNNNNNNSNNNENSNNE) are enriched in low complexity. Positions 2594 to 2671 (SDNEFIHSTI…QSIDIIKFGY (78 aa)) constitute a Carrier domain. Serine 2631 is modified (O-(pantetheine 4'-phosphoryl)serine).

Requires pantetheine 4'-phosphate as cofactor.

Functionally, probable polyketide synthase. The sequence is that of Probable polyketide synthase 28 (pks28) from Dictyostelium discoideum (Social amoeba).